We begin with the raw amino-acid sequence, 1639 residues long: Mediator of RNA polymerase II transcription subunit 14 (1639 aa).

Positions 49–53 (LAELL) match the LXXLL motif 1 motif. Disordered regions lie at residues 561–586 (GQSPDVLSGQPPQPSAAGGPAPGSDS) and 709–755 (LPQP…KTVH). Positions 575–586 (SAAGGPAPGSDS) are enriched in low complexity. Pro residues predominate over residues 711–721 (QPKPPQAPPTP). Positions 722–748 (QQQQQQQQQQQQPGTSDAKSSGAGASA) are enriched in low complexity. Residues 768–772 (LKRLL) carry the LXXLL motif 2 motif. Disordered stretches follow at residues 1039–1243 (RRSQ…HHYT) and 1558–1639 (MQPG…GGPN). Gly residues-rich tracts occupy residues 1062 to 1088 (GNNGGGGGGGGGAGGGANTFLSGGTGM) and 1122 to 1142 (IGGGGGAGGAGGQGGQGGQGG). The span at 1189 to 1201 (GPSSLSYMQSHTD) shows a compositional bias: polar residues. The segment covering 1219–1229 (PGMPRPSPRPG) has biased composition (pro residues). The span at 1558–1579 (MQPGGGPGVPGGPGGPMGGQIG) shows a compositional bias: gly residues. Positions 1589–1603 (VGSSPSPMMHSPMQQ) are enriched in low complexity. Positions 1604 to 1639 (MGGGGPQPGAYGGMVGGPGGGPQSGGPVGGGPGGPN) are enriched in gly residues.

It belongs to the Mediator complex subunit 14 family. In terms of assembly, component of the Mediator complex.

The protein localises to the nucleus. Functionally, component of the Mediator complex, a coactivator involved in the regulated transcription of nearly all RNA polymerase II-dependent genes. Mediator functions as a bridge to convey information from gene-specific regulatory proteins to the basal RNA polymerase II transcription machinery. Mediator is recruited to promoters by direct interactions with regulatory proteins and serves as a scaffold for the assembly of a functional preinitiation complex with RNA polymerase II and the general transcription factors. The protein is Mediator of RNA polymerase II transcription subunit 14 (MED14) of Anopheles gambiae (African malaria mosquito).